The sequence spans 168 residues: Large ribosomal subunit protein uL10 (168 aa).

This sequence belongs to the universal ribosomal protein uL10 family. As to quaternary structure, part of the ribosomal stalk of the 50S ribosomal subunit. The N-terminus interacts with L11 and the large rRNA to form the base of the stalk. The C-terminus forms an elongated spine to which L12 dimers bind in a sequential fashion forming a multimeric L10(L12)X complex.

Forms part of the ribosomal stalk, playing a central role in the interaction of the ribosome with GTP-bound translation factors. The protein is Large ribosomal subunit protein uL10 of Clostridium acetobutylicum (strain ATCC 824 / DSM 792 / JCM 1419 / IAM 19013 / LMG 5710 / NBRC 13948 / NRRL B-527 / VKM B-1787 / 2291 / W).